Reading from the N-terminus, the 730-residue chain is Actin filament-associated protein 1 (730 aa).

N-acetylmethionine is present on methionine 1. The segment at 47-91 (KDHAQKQETANSLPAPPQMPLPEIPQPWLPPDSGPPPLPTSSLPE) is disordered. The segment covering 60-85 (PAPPQMPLPEIPQPWLPPDSGPPPLP) has biased composition (pro residues). An SH3-binding motif is present at residues 71 to 74 (PQPW). The SH2-binding 1 signature appears at 94 to 97 (YEEA). The interval 119–140 (SSSYESYDEEEEDGKGKKTRHQ) is disordered. The 97-residue stretch at 153–249 (DAKICAFLLR…WLKVIKEAYS (97 aa)) folds into the PH 1 domain. A disordered region spans residues 252-292 (SGPVDSECPPPPSSPVHKAELEKKLSSERPSSDGEGVVENG). Residues 268–283 (HKAELEKKLSSERPSS) show a composition bias toward basic and acidic residues. Phosphoserine occurs at positions 282 and 283. Residues 347–441 (DVPTCGYLNV…WIGILLAETG (95 aa)) form the PH 2 domain. The SH2-binding 2 signature appears at 451–456 (YDYIDV). The tract at residues 512 to 537 (KGKKPPVASNGVTGKGKTLSSQPKKA) is disordered. Serine 548 is subject to Phosphoserine. Positions 557–648 (KNRVEADAKR…VKESLKKALA (92 aa)) form a coiled coil. Residues 594 to 637 (DLRAAIEVNAGRKPQAILEEKLKQLEEECRQKEAERVSLELELT) are interaction with F-actin. Serine 664, serine 665, and serine 668 each carry phosphoserine. Threonine 675 is subject to Phosphothreonine. Phosphoserine is present on residues serine 679 and serine 687.

In terms of assembly, monomer and homomultimer. Interacts via its C-terminus with F-actin; probably involving AFAP1 multimers. Interacts with activated SRC SH3-SH2 domains. Interacts via its PH 1 domain with PRKCA, PRKCB and PRKCI. Phosphorylated on tyrosine residues by SRC. As to expression, low expression in normal breast epithelial cell line MCF-10A and in tumorigenic breast cancer cell lines MCF-7, T-47D and ZR-75-1. Highly expressed in the invasive breast cancer cell lines MDA-MB-231 and MDA-MB-435. Overexpressed in prostate carcinoma.

It is found in the cytoplasm. The protein localises to the cytoskeleton. The protein resides in the stress fiber. Functionally, can cross-link actin filaments into both network and bundle structures. May modulate changes in actin filament integrity and induce lamellipodia formation. May function as an adapter molecule that links other proteins, such as SRC and PKC to the actin cytoskeleton. Seems to play a role in the development and progression of prostate adenocarcinoma by regulating cell-matrix adhesions and migration in the cancer cells. The sequence is that of Actin filament-associated protein 1 (AFAP1) from Homo sapiens (Human).